We begin with the raw amino-acid sequence, 351 residues long: Histidine protein kinase SaeS (351 aa).

The next 2 membrane-spanning stretches (helical) occupy residues 9–29 (IIIG…IAYI) and 40–60 (TLTL…SIFI). One can recognise an HAMP domain in the interval 61–114 (NPLIQKIKQFNIKTKQFANGNYASNDKTFNSPKEIYELNQSFNKMASEITQQMN). Positions 129–348 (NLAHDLKTPL…TMTVTLHKLD (220 aa)) constitute a Histidine kinase domain. Residue His132 is modified to Phosphohistidine; by autocatalysis.

Autophosphorylated.

The protein resides in the cell membrane. It carries out the reaction ATP + protein L-histidine = ADP + protein N-phospho-L-histidine.. Functionally, member of the two-component regulatory system SaeR/SaeS involved in the regulation of staphylococcal virulence factors in a strain-dependent fashion. Probably functions as a membrane-associated protein kinase that upon sensing the appropriate signal, autophosphorylates and in turn activates the cytosolic response regulator SaeR. SaeR/SaeS activates the expression of exoproteins involved in adhesion and invasion of host cells, including hemolysins (hla, hlb, hlgC), coa, DNase, spa and cell wall-associated proteins (emp, eap, fnbA, fnbB, efb). Represses the expression of type 5 capsular polysaccharide (cap operon). Also modulates the expression of several other genes. In Staphylococcus aureus (strain Newman), this protein is Histidine protein kinase SaeS (saeS).